Consider the following 750-residue polypeptide: Photosystem I P700 chlorophyll a apoprotein A1 (750 aa).

8 consecutive transmembrane segments (helical) span residues 70-93 (VFSAHFGQLSIIFLWLSGMYFHGA), 156-179 (LYCTGIGALVCAALMLFAGWFHYH), 195-219 (LNHHLAGLLGLGSLSWAGHQVHVSL), 291-309 (IAHHHLAIAILFLIAGHMY), 346-369 (WHAQLSLNLAMLGSLTIIVAHHMY), 385-411 (LSLFTHHMWIGGFLIVGAAAHAAIFMV), 433-455 (AIISHLNWVCIFLGFHSFGLYIH), and 531-549 (FLVHHIHAFTIHVPVLILL). Residues Cys573 and Cys582 each coordinate [4Fe-4S] cluster. 2 helical membrane passes run 589 to 610 (HVFLGLFWMYNAISVVIFHFSW) and 664 to 686 (LSAYGLFFLGAHFVWAFSLMFLF). His675 contacts chlorophyll a'. Residues Met683 and Tyr691 each contribute to the chlorophyll a site. Residue Trp692 coordinates phylloquinone. A helical membrane pass occupies residues 724–744 (AVGVTHYLLGGIATTWAFFLA).

This sequence belongs to the PsaA/PsaB family. As to quaternary structure, the PsaA/B heterodimer binds the P700 chlorophyll special pair and subsequent electron acceptors. PSI consists of a core antenna complex that captures photons, and an electron transfer chain that converts photonic excitation into a charge separation. The eukaryotic PSI reaction center is composed of at least 11 subunits. It depends on P700 is a chlorophyll a/chlorophyll a' dimer, A0 is one or more chlorophyll a, A1 is one or both phylloquinones and FX is a shared 4Fe-4S iron-sulfur center. as a cofactor.

It localises to the plastid. The protein localises to the chloroplast thylakoid membrane. The catalysed reaction is reduced [plastocyanin] + hnu + oxidized [2Fe-2S]-[ferredoxin] = oxidized [plastocyanin] + reduced [2Fe-2S]-[ferredoxin]. PsaA and PsaB bind P700, the primary electron donor of photosystem I (PSI), as well as the electron acceptors A0, A1 and FX. PSI is a plastocyanin-ferredoxin oxidoreductase, converting photonic excitation into a charge separation, which transfers an electron from the donor P700 chlorophyll pair to the spectroscopically characterized acceptors A0, A1, FX, FA and FB in turn. Oxidized P700 is reduced on the lumenal side of the thylakoid membrane by plastocyanin. This chain is Photosystem I P700 chlorophyll a apoprotein A1, found in Crucihimalaya wallichii (Rock-cress).